The sequence spans 154 residues: MAYYWIAAAVVILDQWTKWLVVRYMQLGESIPIIDNVLYITSHRNRGAAWGMLEGQFWLFYLITVIVVAAIVIYIRRLKPSERLAGVGLGLMLGGAIGNFLDRVFRKEVVDFIHAYIGTYSFPVFNVADSALTVGVILLFVHMFFFATPEKGNE.

2 consecutive transmembrane segments (helical) span residues glycine 55–isoleucine 75 and alanine 85–phenylalanine 105. Catalysis depends on residues aspartate 111 and aspartate 129. The helical transmembrane segment at valine 127–alanine 147 threads the bilayer.

It belongs to the peptidase A8 family.

It localises to the cell membrane. The catalysed reaction is Release of signal peptides from bacterial membrane prolipoproteins. Hydrolyzes -Xaa-Yaa-Zaa-|-(S,diacylglyceryl)Cys-, in which Xaa is hydrophobic (preferably Leu), and Yaa (Ala or Ser) and Zaa (Gly or Ala) have small, neutral side chains.. The protein operates within protein modification; lipoprotein biosynthesis (signal peptide cleavage). In terms of biological role, this protein specifically catalyzes the removal of signal peptides from prolipoproteins. This Geobacillus kaustophilus (strain HTA426) protein is Lipoprotein signal peptidase.